Here is a 52-residue protein sequence, read N- to C-terminus: UPF0391 membrane protein XOO4217 (52 aa).

The next 2 membrane-spanning stretches (helical) occupy residues 5–25 (AMIFFVIAIIAAVLGFSGIAG) and 27–47 (ATNIAWILFVVFLILAVISMF).

The protein belongs to the UPF0391 family.

It is found in the cell membrane. The polypeptide is UPF0391 membrane protein XOO4217 (Xanthomonas oryzae pv. oryzae (strain KACC10331 / KXO85)).